The following is a 193-amino-acid chain: MTRLLGGRIEVICGCMFSGKTEELIRRLNHVRLARQRLIAFTPRRDTRYRLGSLVSHNGLSVEARVIDSIRDIPAYLDSDVDVVAVDELHLLDDPPDAAREVCQQLADRGLRVIVAGLDQDFRAQPFPAMAQLMAVAEQVDKLYAICVRCGAYATRSQRLIDGKPAPADAPTIVVGGQELYEARCRACYEPAQ.

Residues 14-21 and 87-90 contribute to the ATP site; these read GCMFSGKT and DELH. E88 (proton acceptor) is an active-site residue. Residues C147, C150, C185, and C188 each contribute to the Zn(2+) site.

The protein belongs to the thymidine kinase family. Homotetramer.

It is found in the cytoplasm. The catalysed reaction is thymidine + ATP = dTMP + ADP + H(+). In Roseiflexus sp. (strain RS-1), this protein is Thymidine kinase.